The following is a 1081-amino-acid chain: Histone demethylase-like protein A (1081 aa).

The tract at residues 37-173 (QHLQHPSLPN…LSGNTDYARY (137 aa)) is disordered. The span at 66–81 (SPSCNESNESNGETSS) shows a compositional bias: low complexity. Over residues 119–132 (DTSNILSGSATSVS) the composition is skewed to polar residues. Positions 141–161 (NSTPPSTVNNVPSSSSITSDS) are enriched in low complexity. Positions 192-287 (CVTAAYACRL…FGCVEIPPAL (96 aa)) constitute an SWIRM domain. The interval 902–940 (ATAQKKKEPPCSNGFSAPVSTSAHPTDASAPARSNNSFS) is disordered. Polar residues predominate over residues 914–925 (NGFSAPVSTSAH). The HMG box DNA-binding region spans 969 to 1049 (ARTGLNPFLL…TNTEIWDRWK (81 aa)).

Belongs to the flavin monoamine oxidase family.

The protein localises to the nucleus. In terms of biological role, H3K4 demethylase-like protein. Might not act as a H3K4 demethylase or is not the major H3K4 demethylase since its deletion does not affect whole genome H3K4 methylation. This Aspergillus fumigatus (strain ATCC MYA-4609 / CBS 101355 / FGSC A1100 / Af293) (Neosartorya fumigata) protein is Histone demethylase-like protein A.